Reading from the N-terminus, the 236-residue chain is LexA repressor (236 aa).

The H-T-H motif DNA-binding region spans 26-46; that stretch reads FDEMKDALDLRSKSGIHRLII. Catalysis depends on for autocatalytic cleavage activity residues serine 157 and lysine 195.

This sequence belongs to the peptidase S24 family. Homodimer.

It carries out the reaction Hydrolysis of Ala-|-Gly bond in repressor LexA.. Represses a number of genes involved in the response to DNA damage (SOS response), including recA and lexA. In the presence of single-stranded DNA, RecA interacts with LexA causing an autocatalytic cleavage which disrupts the DNA-binding part of LexA, leading to derepression of the SOS regulon and eventually DNA repair. In Methylocella silvestris (strain DSM 15510 / CIP 108128 / LMG 27833 / NCIMB 13906 / BL2), this protein is LexA repressor.